A 690-amino-acid polypeptide reads, in one-letter code: Elongation factor G (690 aa).

The 276-residue stretch at 8–283 folds into the tr-type G domain; the sequence is EYIRNIGICA…AVVGFLPSPI (276 aa). GTP contacts are provided by residues 17–24, 81–85, and 135–138; these read AHIDAGKT, DTPGH, and NKMD.

This sequence belongs to the TRAFAC class translation factor GTPase superfamily. Classic translation factor GTPase family. EF-G/EF-2 subfamily.

The protein localises to the cytoplasm. Its function is as follows. Catalyzes the GTP-dependent ribosomal translocation step during translation elongation. During this step, the ribosome changes from the pre-translocational (PRE) to the post-translocational (POST) state as the newly formed A-site-bound peptidyl-tRNA and P-site-bound deacylated tRNA move to the P and E sites, respectively. Catalyzes the coordinated movement of the two tRNA molecules, the mRNA and conformational changes in the ribosome. The sequence is that of Elongation factor G from Rickettsia canadensis (strain McKiel).